The sequence spans 706 residues: Glycylpeptide N-tetradecanoyltransferase (706 aa).

Residues 1-119 form a disordered region; sequence MSGIAGTSQD…LASGSSREGK (119 aa). Residues 7 to 42 are compositionally biased toward low complexity; sequence TSQDTSVAASASSSSTRPAAASSSIAPPSPSLTTAP. Over residues 47 to 65 the composition is skewed to acidic residues; it reads EQDDDDDQENDDEEEEEEG. Basic residues predominate over residues 78–95; that stretch reads KQRKKKKSKAAAKLRKKL. Tetradecanoyl-CoA-binding positions include 180 to 183, 317 to 319, and 325 to 329; these read HKFW, LCV, and SKRLA. Val706 (proton acceptor; via carboxylate) is an active-site residue.

Belongs to the NMT family. In terms of assembly, monomer.

The protein resides in the cytoplasm. The catalysed reaction is N-terminal glycyl-[protein] + tetradecanoyl-CoA = N-tetradecanoylglycyl-[protein] + CoA + H(+). Its function is as follows. Adds a myristoyl group to the N-terminal glycine residue of certain cellular proteins. This Mycosarcoma maydis (Corn smut fungus) protein is Glycylpeptide N-tetradecanoyltransferase (NMT1).